Consider the following 319-residue polypeptide: Protein-methionine-sulfoxide reductase catalytic subunit MsrP (319 aa).

A signal peptide (tat-type signal) is located at residues 1-54 (MSSFKPSRFSTARLTGDAVTPKSIYLRRREFMIGLGAIAATGAASSAFADPLEA). Mo-molybdopterin contacts are provided by residues Asn-75, 78 to 79 (YE), Cys-133, Asn-218, Arg-223, and 234 to 236 (GIK).

The protein belongs to the MsrP family. In terms of assembly, heterodimer of a catalytic subunit (MsrP) and a heme-binding subunit (MsrQ). Requires Mo-molybdopterin as cofactor. In terms of processing, predicted to be exported by the Tat system. The position of the signal peptide cleavage has not been experimentally proven.

The protein resides in the periplasm. It catalyses the reaction L-methionyl-[protein] + a quinone + H2O = L-methionyl-(S)-S-oxide-[protein] + a quinol. The enzyme catalyses L-methionyl-[protein] + a quinone + H2O = L-methionyl-(R)-S-oxide-[protein] + a quinol. In terms of biological role, part of the MsrPQ system that repairs oxidized periplasmic proteins containing methionine sulfoxide residues (Met-O), using respiratory chain electrons. Thus protects these proteins from oxidative-stress damage caused by reactive species of oxygen and chlorine generated by the host defense mechanisms. MsrPQ is essential for the maintenance of envelope integrity under bleach stress, rescuing a wide series of structurally unrelated periplasmic proteins from methionine oxidation. The catalytic subunit MsrP is non-stereospecific, being able to reduce both (R-) and (S-) diastereoisomers of methionine sulfoxide. This Brucella melitensis biotype 1 (strain ATCC 23456 / CCUG 17765 / NCTC 10094 / 16M) protein is Protein-methionine-sulfoxide reductase catalytic subunit MsrP.